The following is a 458-amino-acid chain: Histidine--tRNA ligase (458 aa).

This sequence belongs to the class-II aminoacyl-tRNA synthetase family. In terms of assembly, homodimer.

It is found in the cytoplasm. It carries out the reaction tRNA(His) + L-histidine + ATP = L-histidyl-tRNA(His) + AMP + diphosphate + H(+). The protein is Histidine--tRNA ligase of Micrococcus luteus (strain ATCC 4698 / DSM 20030 / JCM 1464 / CCM 169 / CCUG 5858 / IAM 1056 / NBRC 3333 / NCIMB 9278 / NCTC 2665 / VKM Ac-2230) (Micrococcus lysodeikticus).